Consider the following 297-residue polypeptide: ER membrane protein complex subunit 2-B (297 aa).

TPR repeat units lie at residues 87–120, 155–188, and 192–225; these read HRVKRLTGLRFEAMERYDDALQIYDRILQDDPTN, QEAWHELAELYINELDYAKAAFCLEELILTNPHN, and YQQFAEVKYTQGGLENLELSRKYFSQALKLNNHS.

It belongs to the EMC2 family. Component of the ER membrane protein complex (EMC).

The protein resides in the endoplasmic reticulum membrane. Its function is as follows. Part of the endoplasmic reticulum membrane protein complex (EMC) that enables the energy-independent insertion into endoplasmic reticulum membranes of newly synthesized membrane proteins. Preferentially accommodates proteins with transmembrane domains that are weakly hydrophobic or contain destabilizing features such as charged and aromatic residues. Involved in the cotranslational insertion of multi-pass membrane proteins in which stop-transfer membrane-anchor sequences become ER membrane spanning helices. It is also required for the post-translational insertion of tail-anchored/TA proteins in endoplasmic reticulum membranes. By mediating the proper cotranslational insertion of N-terminal transmembrane domains in an N-exo topology, with translocated N-terminus in the lumen of the ER, controls the topology of multi-pass membrane proteins. By regulating the insertion of various proteins in membranes, it is indirectly involved in many cellular processes. This Xenopus laevis (African clawed frog) protein is ER membrane protein complex subunit 2-B (emc2-b).